An 880-amino-acid chain; its full sequence is Phosphoinositide 3-kinase regulatory subunit 5 (880 aa).

The residue at position 1 (Met1) is an N-acetylmethionine. Residues 25–101 (SLSRRSTSWS…TPHFPPDSDL (77 aa)) form a heterodimerization region. Disordered regions lie at residues 315-339 (GILG…TDGH), 389-416 (SGYV…GHRR), 454-510 (RRAG…SGDE), and 565-601 (HGTS…TPWE). Over residues 318–335 (GDDEEEEEEEEEVEEDLE) the composition is skewed to acidic residues. Residues Ser458 and Ser507 each carry the phosphoserine modification. Residues 571–585 (ACPPPRSQTPSPPTD) show a composition bias toward pro residues. The segment at 653–753 (PILADMLLYY…WSNLEKVCTS (101 aa)) is interaction with beta-gamma G protein dimers.

As to quaternary structure, heterodimer of a catalytic subunit (PIK3CG/p120) and a regulatory (PIK3R5a/p101) subunit. Interacts with beta-gamma G protein dimers. As to expression, ubiquitously expressed with high expression in fetal brain compared to adult brain. Abundant expression is observed in cerebellum, cerebral cortex, cerebral meninges, and vermis cerebelli.

The protein localises to the nucleus. Its subcellular location is the cytoplasm. It is found in the cell membrane. With respect to regulation, greatly activated by G gamma proteins. Regulatory subunit of the PI3K gamma complex. Required for recruitment of the catalytic subunit to the plasma membrane via interaction with beta-gamma G protein dimers. Required for G protein-mediated activation of PIK3CG. The sequence is that of Phosphoinositide 3-kinase regulatory subunit 5 (PIK3R5) from Homo sapiens (Human).